The following is a 335-amino-acid chain: Glycerol-3-phosphate dehydrogenase [NAD(P)+] (335 aa).

NADPH contacts are provided by Ser-12, Trp-13, and Lys-107. Lys-107, Gly-138, and Ser-140 together coordinate sn-glycerol 3-phosphate. Ala-142 is a binding site for NADPH. Lys-193, Asp-246, Ser-256, Arg-257, and Asn-258 together coordinate sn-glycerol 3-phosphate. The Proton acceptor role is filled by Lys-193. Arg-257 lines the NADPH pocket. NADPH is bound by residues Val-281 and Glu-283.

This sequence belongs to the NAD-dependent glycerol-3-phosphate dehydrogenase family.

The protein localises to the cytoplasm. It catalyses the reaction sn-glycerol 3-phosphate + NAD(+) = dihydroxyacetone phosphate + NADH + H(+). The catalysed reaction is sn-glycerol 3-phosphate + NADP(+) = dihydroxyacetone phosphate + NADPH + H(+). It participates in membrane lipid metabolism; glycerophospholipid metabolism. In terms of biological role, catalyzes the reduction of the glycolytic intermediate dihydroxyacetone phosphate (DHAP) to sn-glycerol 3-phosphate (G3P), the key precursor for phospholipid synthesis. This chain is Glycerol-3-phosphate dehydrogenase [NAD(P)+], found in Citrifermentans bemidjiense (strain ATCC BAA-1014 / DSM 16622 / JCM 12645 / Bem) (Geobacter bemidjiensis).